A 726-amino-acid polypeptide reads, in one-letter code: Transmembrane channel-like protein 8 (726 aa).

Topologically, residues 1–114 are cytoplasmic; sequence MLLPRSVSSE…GIRSYFTFLR (114 aa). At serine 6 the chain carries Phosphoserine. Residues 115-135 form a helical membrane-spanning segment; the sequence is FLLLLNLLSLLLTASFVLLPL. Residues 136 to 200 lie on the Lumenal side of the membrane; the sequence is VWLRPPDPGP…VGPESSSVYS (65 aa). An N-linked (GlcNAc...) asparagine glycan is attached at asparagine 148. A helical transmembrane segment spans residues 201–221; that stretch reads IRLAYLLSPLACLLLCFCGTL. Topologically, residues 222–299 are cytoplasmic; it reads RRMVKGLPQK…AQTACRLLSY (78 aa). The chain crosses the membrane as a helical span at residues 300 to 320; that stretch reads LRVNVLNGLLVVGAISAIFWA. Residues 321 to 338 are Lumenal-facing; that stretch reads TKYSQDNKEESLFLLLQY. The helical transmembrane segment at 339–359 threads the bilayer; the sequence is LPPGVIALVNFLGPLLFTFLV. The Cytoplasmic portion of the chain corresponds to 360-426; sequence QLENYPPNTE…QCWENSVGEE (67 aa). Positions 362-530 are TMC domain; sequence ENYPPNTEVN…SSRPFRASSS (169 aa). A helical transmembrane segment spans residues 427–447; the sequence is LYKLSIFNFLLTVAFAFLVTL. Topologically, residues 448-488 are lumenal; the sequence is PRRLLVDRFSGRFWAWLEREEFLVPKNVLDIVAGQTVTWMG. The helical transmembrane segment at 489–509 threads the bilayer; that stretch reads LFYCPLLPLLNSVFLFLTFYI. Over 510 to 531 the chain is Cytoplasmic; sequence KKYTLLKNSRASSRPFRASSST. The helical transmembrane segment at 532 to 552 threads the bilayer; it reads FFFQLVLLLGLLLAAVPLGYV. Topologically, residues 553-594 are lumenal; the sequence is VSSIHSSWDCGLFTNYSAPWQVVPELVALGLPPIGQRALHYL. Asparagine 567 is a glycosylation site (N-linked (GlcNAc...) asparagine). The chain crosses the membrane as a helical span at residues 595–615; that stretch reads GSHAFSFPLLIMLSLVLTVCV. Residues 616–726 lie on the Cytoplasmic side of the membrane; it reads SQTQANARAI…RFRFPSGAEL (111 aa). A disordered region spans residues 651–726; sequence PEPGPSDSPG…RFRFPSGAEL (76 aa). The span at 652-662 shows a compositional bias: pro residues; that stretch reads EPGPSDSPGPK. 2 positions are modified to phosphoserine: serine 658 and serine 673.

It belongs to the TMC family. As to quaternary structure, interacts with TMC6. Interacts and forms a complex with TMC6 and CIB1; the interaction stabilizes each component of the complex. Interacts and forms a complex with TMC6 and SLC30A1/ZNT1; the interaction regulates zinc transport into the ER. Interacts with TRADD; the interaction competes with TRADD/RIPK1/TRAF2/cIAPs complex I formation and facilites complex II formation. In terms of assembly, (Microbial infection) Interacts with human papillomavirus 16/HPV16 protein E5; the interaction alleviates TMC8-mediated transcription factors inhibition. In terms of tissue distribution, expressed in placenta, prostate and testis.

It is found in the endoplasmic reticulum membrane. The protein localises to the golgi apparatus membrane. The protein resides in the nucleus membrane. Acts as a regulatory protein involved in the regulation of numerous cellular processes. Together with its homolog TMC6/EVER1, forms a complex with calcium-binding protein CIB1 in lymphocytes and keratynocytes where TMC6 and TMC8 stabilize CIB1 levels and reciprocally. Together with TMC6, also forms a complex with and activates zinc transporter ZNT1 at the ER membrane of keratynocytes, thereby facilitating zinc uptake into the ER. Also inhibits receptor-mediated calcium release from ER stores and calcium activated and volume regulated chloride channels. Down-regulates the activity of transcription factors induced by zinc and cytokines. Also sequesters TRADD which impairs the recruitment of TRAF2 and RIPK1 in the pro-survival complex I and promotes proapoptotic complex II formation, and may therefore be involved in TNF-induced cell death/survival decisions. The polypeptide is Transmembrane channel-like protein 8 (Homo sapiens (Human)).